A 459-amino-acid chain; its full sequence is Endoglucanase CelA (459 aa).

The first 27 residues, 1–27 (MKRLLALLATGVSIVGLTALAGPPAQA), serve as a signal peptide directing secretion. The 107-residue stretch at 28–134 (ATGCKAEYTI…TLNGATCSGS (107 aa)) folds into the CBM2 domain. A disulfide bond links Cys31 and Cys131. Positions 129 to 151 (ATCSGSVTDPPTDPPTDPPATGT) are disordered. The tract at residues 136-147 (TDPPTDPPTDPP) is linker ('hinge') (Pro-Thr box). A catalytic region spans residues 148 to 357 (ATGTPAAVNG…YAFHFYAASH (210 aa)). Glu286 (proton donor) is an active-site residue. Glu378 (nucleophile) is an active-site residue.

It belongs to the glycosyl hydrolase 5 (cellulase A) family. In terms of processing, the linker region (also termed 'hinge') may be a potential site for proteolysis.

It catalyses the reaction Endohydrolysis of (1-&gt;4)-beta-D-glucosidic linkages in cellulose, lichenin and cereal beta-D-glucans.. In Streptomyces lividans, this protein is Endoglucanase CelA (celA).